Consider the following 325-residue polypeptide: MATH domain and coiled-coil domain-containing protein At3g58430 (325 aa).

Residues 6-131 enclose the MATH domain; it reads HKKFCWIIKN…KGDFKIIAEV (126 aa). A coiled-coil region spans residues 258-306; sequence FKVDWLEKKLDQVKDKKEREQSGLARLHELEEYLLKLKQKCSNLDLLVE.

This chain is MATH domain and coiled-coil domain-containing protein At3g58430, found in Arabidopsis thaliana (Mouse-ear cress).